We begin with the raw amino-acid sequence, 566 residues long: 4-hydroxy-7-methoxy-3-oxo-3,4-dihydro-2H-1,4-benzoxazin-2-yl glucoside beta-D-glucosidase 1, chloroplastic (566 aa).

Residues 1–54 (MAPLLAAAMNHAAAHPGLRSHLVGPNNESFSRHHLPSSSPQSSKRRCNLSFTTR) constitute a chloroplast transit peptide. Positions 17–47 (GLRSHLVGPNNESFSRHHLPSSSPQSSKRRC) are disordered. A beta-D-glucoside contacts are provided by residues Gln-92, His-196, and 244–245 (NE). Glu-245 functions as the Proton donor in the catalytic mechanism. The cysteines at positions 264 and 270 are disulfide-linked. The interval 325–361 (SFLDKQAEERSWDINLGWFLEPVVRGDYPFSMRSLAR) is dimerization. An a beta-D-glucoside-binding site is contributed by Tyr-387. Dimerization stretches follow at residues 394 to 405 (NIDISPNYSPVL) and 450 to 453 (KYGN). Residues Glu-460, Trp-511, 518-519 (EW), and Tyr-527 each bind a beta-D-glucoside. The active-site Nucleophile is Glu-460.

This sequence belongs to the glycosyl hydrolase 1 family. In terms of assembly, homo- and heterodimer. In terms of tissue distribution, expressed in all seedling parts. Most abundant in the coleoptile.

It is found in the plastid. The protein resides in the chloroplast. The enzyme catalyses Hydrolysis of terminal, non-reducing beta-D-glucosyl residues with release of beta-D-glucose.. It catalyses the reaction DIMBOA beta-D-glucoside + H2O = DIMBOA + D-glucose. The catalysed reaction is DIBOA beta-D-glucoside + H2O = DIBOA + D-glucose. Its activity is regulated as follows. Reversibly inhibited by micromolar concentrations of Hg(2+) or Ag(+), but irreversibly inhibited by alkylation in presence of urea. Competitive inhibition by p-nitrophenyl beta-D-thioglucoside (pNPTGlc), glucotetrazole, and para-hydroxy-S-mandelonitrile beta-glucoside (dhurrin). Functionally, is implicated in many functions such as ABA metabolism, hydrolysis of conjugated gibberellins, conversion of storage forms of cytokinins to active forms. Also acts in defense of young plant parts against pests via the production of hydroxamic acids from hydroxamic acid glucosides. Enzymatic activity is highly correlated with plant growth. The preferred substrate is DIMBOA-beta-D-glucoside. Hydrolyzes the chromogenic substrate 6-bromo-2-naphthyl-beta-D-glucoside (6BNGlc) and various artificial aryl beta-glucosides. No activity with cellobiose, arbutin, gentiobiose, linamarin or dhurrin as substrates. This chain is 4-hydroxy-7-methoxy-3-oxo-3,4-dihydro-2H-1,4-benzoxazin-2-yl glucoside beta-D-glucosidase 1, chloroplastic (GLU1), found in Zea mays (Maize).